Consider the following 417-residue polypeptide: Alpha-ionylideneethane synthase aba3 (417 aa).

Belongs to the alpha-ionylideneethane synthase family.

It functions in the pathway hormone biosynthesis. Alpha-ionylideneethane synthase; part of the gene cluster that mediates the biosynthesis of abscisic acid (ABA), a phytohormone that acts antagonistically toward salicylic acid (SA), jasmonic acid (JA) and ethylene (ETH) signaling, to impede plant defense responses. The first step of the pathway catalyzes the reaction from farnesyl diphosphate to alpha-ionylideneethane performed by the alpha-ionylideneethane synthase aba3 via a three-step reaction mechanism involving 2 neutral intermediates, beta-farnesene and allofarnesene. The cytochrome P450 monooxygenase aba1 might then be involved in the conversion of alpha-ionylideneethane to alpha-ionylideneacetic acid. Alpha-ionylideneacetic acid is further converted to abscisic acid in 2 steps involving the cytochrome P450 monooxygenase aba2 and the short-chain dehydrogenase/reductase aba4, via the intermediates 1'-deoxy-ABA or 1',4'-trans-diol-ABA, depending on the order of action of these 2 enzymes. Aba2 is responsible for the hydroxylation of carbon atom C-1' and aba4 might be involved in the oxidation of the C-4' carbon atom. The chain is Alpha-ionylideneethane synthase aba3 from Botryotinia fuckeliana (Noble rot fungus).